The sequence spans 298 residues: MIIKRREYMRIADYSVTKAVLDRHGFTFKKSFGQNFLTDTNILQKIVDTAEIDQNVNVIEIGPGIGALTEFLAENAAEVMAFEIDDRLVPILADTLRDFDNVQVVNQDILKADLQTQIKQFKNPDLPIKVVANLPYYITTPILMHLIESKIPFQEFVVMMQREVADRISAEPNTKAYGSLSIAVQYYMTAKVAFIVPRTVFVPAPNVDSAILKMVRRDQPLIEVKDEDFFFRVSRLSFVHRRKTLWNNLTSHFGKSEDIKTKLEKGLALADIKPSIRGEALSIQDFGKLADALKEVGL.

The S-adenosyl-L-methionine site is built by N35, L37, G62, E83, D108, and N133.

This sequence belongs to the class I-like SAM-binding methyltransferase superfamily. rRNA adenine N(6)-methyltransferase family. RsmA subfamily.

The protein localises to the cytoplasm. It carries out the reaction adenosine(1518)/adenosine(1519) in 16S rRNA + 4 S-adenosyl-L-methionine = N(6)-dimethyladenosine(1518)/N(6)-dimethyladenosine(1519) in 16S rRNA + 4 S-adenosyl-L-homocysteine + 4 H(+). Its function is as follows. Specifically dimethylates two adjacent adenosines (A1518 and A1519) in the loop of a conserved hairpin near the 3'-end of 16S rRNA in the 30S particle. May play a critical role in biogenesis of 30S subunits. This is Ribosomal RNA small subunit methyltransferase A from Streptococcus pyogenes serotype M2 (strain MGAS10270).